A 584-amino-acid polypeptide reads, in one-letter code: Putative sel1-like repeat-containing protein L18 (584 aa).

Sel1-like repeat units lie at residues Ser132–Asn167, Lys168–Phe203, Ser204–His237, Ser238–Leu273, Asn274–Gly309, and Glu316–Asn351.

The sequence is that of Putative sel1-like repeat-containing protein L18 from Acanthamoeba polyphaga (Amoeba).